The chain runs to 586 residues: Beta-fructofuranosidase, insoluble isoenzyme 3 (586 aa).

The first 26 residues, 1–26, serve as a signal peptide directing secretion; the sequence is MATARARAALVFVALLQMAAVVVVRA. Residue Asp-61 is part of the active site. N-linked (GlcNAc...) asparagine glycans are attached at residues Asn-154, Asn-179, Asn-341, Asn-390, and Asn-479.

The protein belongs to the glycosyl hydrolase 32 family.

The protein resides in the secreted. It is found in the extracellular space. The protein localises to the apoplast. Its subcellular location is the cell wall. The catalysed reaction is Hydrolysis of terminal non-reducing beta-D-fructofuranoside residues in beta-D-fructofuranosides.. This chain is Beta-fructofuranosidase, insoluble isoenzyme 3 (CIN3), found in Oryza sativa subsp. indica (Rice).